The primary structure comprises 362 residues: RNA-binding protein 4 (362 aa).

RRM domains follow at residues 2–72 (VKLF…ASKN) and 78–148 (TKLH…LSTS). Lys-79 participates in a covalent cross-link: Glycyl lysine isopeptide (Lys-Gly) (interchain with G-Cter in SUMO2). Ser-86 bears the Phosphoserine mark. A Glycyl lysine isopeptide (Lys-Gly) (interchain with G-Cter in SUMO2) cross-link involves residue Lys-92. The CCHC-type zinc-finger motif lies at 160-177 (SGCYRCGKEGHWSKECPV). Residues 196 to 362 (AVRTPYTMGY…YADRARYSAF (167 aa)) form an interaction with TNPO3 region. A disordered region spans residues 306–336 (RSPLRRATGPVPTVGEGYGYGHESELSQGSS). Ser-307 bears the Phosphoserine mark.

In terms of assembly, interacts with TNPO3; the interaction mediates nuclear import of the protein and is disrupted by nuclear Ran bound to GTP. Interacts with EIF4G1 and WT1. Interacts with EIF4A1; the interaction is modulated under stress-induced conditions. Interacts with AGO1. Interacts with AGO2; the interaction occurs under both cell proliferation and differentiation conditions and in an RNA- and phosphorylation-independent manner. Interacts with DDX5; the interaction occurs in an RNA-independent manner. Interacts with RBPMS; the interaction allows cooperative assembly of RNA-bound stable cell-specific alternative splicing regulatory complexes. Phosphorylated. Phosphorylated in vitro on Ser-307 by SRPK1. Phosphorylation on Ser-307 is induced upon cell stress signaling, which alters its subcellular localization and may modulate its activity on IRES-mediated mRNA translation. Phosphorylation on Ser-307 is induced upon cell muscle differentiation.

Its subcellular location is the nucleus. It localises to the nucleolus. The protein localises to the nucleus speckle. The protein resides in the cytoplasm. It is found in the cytoplasmic granule. Functionally, RNA-binding factor involved in multiple aspects of cellular processes like alternative splicing of pre-mRNA and translation regulation. Modulates alternative 5'-splice site and exon selection. Acts as a muscle cell differentiation-promoting factor. Activates exon skipping of the PTB pre-mRNA during muscle cell differentiation. Antagonizes the activity of the splicing factor PTBP1 to modulate muscle cell-specific exon selection of alpha tropomyosin. Binds to intronic pyrimidine-rich sequence of the TPM1 and MAPT pre-mRNAs. Required for the translational activation of PER1 mRNA in response to circadian clock. Binds directly to the 3'-UTR of the PER1 mRNA. Exerts a suppressive activity on Cap-dependent translation via binding to CU-rich responsive elements within the 3'UTR of mRNAs, a process increased under stress conditions or during myocytes differentiation. Recruits EIF4A1 to stimulate IRES-dependent translation initiation in respons to cellular stress. Associates to internal ribosome entry segment (IRES) in target mRNA species under stress conditions. Plays a role for miRNA-guided RNA cleavage and translation suppression by promoting association of AGO2-containing miRNPs with their cognate target mRNAs. Associates with miRNAs during muscle cell differentiation. Binds preferentially to 5'-CGCGCG[GCA]-3' motif in vitro. This Bos taurus (Bovine) protein is RNA-binding protein 4 (RBM4).